The following is an 86-amino-acid chain: Putative defensin-like protein 189 (86 aa).

Residues 1–28 (MKMAKSANEIGFITCLVVFLVLTGQSNG) form the signal peptide. 4 disulfide bridges follow: Cys39–Cys85, Cys52–Cys71, Cys57–Cys80, and Cys61–Cys82.

The protein belongs to the DEFL family.

The protein localises to the secreted. The polypeptide is Putative defensin-like protein 189 (Arabidopsis thaliana (Mouse-ear cress)).